A 3106-amino-acid chain; its full sequence is Probable polyketide synthase 29 (3106 aa).

The segment covering 1 to 11 (MVQNTDNTRNS) has biased composition (polar residues). A disordered region spans residues 1–20 (MVQNTDNTRNSKLIRDRNDY). The 434-residue stretch at 28 to 461 (SGDIAVIGIG…GSNVCLILSE (434 aa)) folds into the Ketosynthase family 3 (KS3) domain. Active-site for beta-ketoacyl synthase activity residues include Cys200, His339, and His384. Positions 661 to 694 (GVSADIIIGHSLGEVSSPYCSGMIDFQTLCYLTY) are acyl/malonyl transferase. Ser671 acts as the For acyl/malonyl transferase activity in catalysis. The segment at 961–1082 (PSIHGLGNNT…GNFSLTKHNS (122 aa)) is N-terminal hotdog fold. The region spanning 961–1266 (PSIHGLGNNT…CALVSLDSNP (306 aa)) is the PKS/mFAS DH domain. His994 serves as the catalytic Proton acceptor; for dehydratase activity. The C-terminal hotdog fold stretch occupies residues 1099–1266 (NFTSISKQDF…CALVSLDSNP (168 aa)). The active-site Proton donor; for dehydratase activity is Asp1171. The 78-residue stretch at 2533-2610 (NNNEIIRSTI…QSIEIILSAH (78 aa)) folds into the Carrier domain. Ser2570 bears the O-(pantetheine 4'-phosphoryl)serine mark. The stretch at 2609 to 2656 (AHNNNNKNNNNNNNINNNNKNNNNNNNKNNNNINNNINNNKNNNNNNN) forms a coiled coil. The interval 2614–2656 (NKNNNNNNNINNNNKNNNNNNNKNNNNINNNINNNKNNNNNNN) is disordered.

Pantetheine 4'-phosphate is required as a cofactor.

Probable polyketide synthase. The protein is Probable polyketide synthase 29 (pks29) of Dictyostelium discoideum (Social amoeba).